The chain runs to 89 residues: MNFSIFLFLIGILGFVLNRKNIILMLISIEIMLLAITFLILISSFNFDDILGQTFAIYIITIAGAESAIGLGILVAYYRLRGSISIQYK.

Helical transmembrane passes span 1–21 (MNFSIFLFLIGILGFVLNRKN), 22–42 (IILMLISIEIMLLAITFLILI), and 55–75 (FAIYIITIAGAESAIGLGILV).

It belongs to the complex I subunit 4L family.

The protein resides in the mitochondrion membrane. It carries out the reaction a ubiquinone + NADH + 5 H(+)(in) = a ubiquinol + NAD(+) + 4 H(+)(out). Its function is as follows. Core subunit of the mitochondrial membrane respiratory chain NADH dehydrogenase (Complex I) that is believed to belong to the minimal assembly required for catalysis. Complex I functions in the transfer of electrons from NADH to the respiratory chain. The immediate electron acceptor for the enzyme is believed to be ubiquinone. The protein is NADH-ubiquinone oxidoreductase chain 4L (nd4L) of Talaromyces marneffei (Penicillium marneffei).